We begin with the raw amino-acid sequence, 342 residues long: MNTNDFDFELPEELIAQTPLEKRDSSKLLIIDHRQKTMVDSHFDHIIDQLNPGDALVMNNTRVLPARLYGEKPDTHGHVELLLLKNTQGDQWEVLAKPAKRLKVGSQVNFGDGRLKATIIDELEHGGRIVEFSYDGIFLEVLESLGEMPLPPYIHEKLEDAERYQTVYAKENGSAAAPTAGLHFTTDLLKKIEAKGVHLVYLTLHVGLGTFRPVSVDNLDEHDMHSEFYSLSEEAAQTLRDVKQAGGRVVAVGTTSIRTLETIGGKFQGDIQADSGWTNIFIKPGYQFKVVDAFSTNFHLPKSTLVMLVSAFAGRDFVLEAYRHAVDEKYRFFSFGDAMFVN.

The protein belongs to the QueA family. Monomer.

It localises to the cytoplasm. The catalysed reaction is 7-aminomethyl-7-carbaguanosine(34) in tRNA + S-adenosyl-L-methionine = epoxyqueuosine(34) in tRNA + adenine + L-methionine + 2 H(+). It functions in the pathway tRNA modification; tRNA-queuosine biosynthesis. Functionally, transfers and isomerizes the ribose moiety from AdoMet to the 7-aminomethyl group of 7-deazaguanine (preQ1-tRNA) to give epoxyqueuosine (oQ-tRNA). The polypeptide is S-adenosylmethionine:tRNA ribosyltransferase-isomerase (Streptococcus pyogenes serotype M12 (strain MGAS2096)).